The following is a 503-amino-acid chain: ATP synthase subunit beta (503 aa).

Glycine 157–threonine 164 lines the ATP pocket.

The protein belongs to the ATPase alpha/beta chains family. In terms of assembly, F-type ATPases have 2 components, CF(1) - the catalytic core - and CF(0) - the membrane proton channel. CF(1) has five subunits: alpha(3), beta(3), gamma(1), delta(1), epsilon(1). CF(0) has three main subunits: a(1), b(2) and c(9-12). The alpha and beta chains form an alternating ring which encloses part of the gamma chain. CF(1) is attached to CF(0) by a central stalk formed by the gamma and epsilon chains, while a peripheral stalk is formed by the delta and b chains.

Its subcellular location is the cell inner membrane. It carries out the reaction ATP + H2O + 4 H(+)(in) = ADP + phosphate + 5 H(+)(out). Functionally, produces ATP from ADP in the presence of a proton gradient across the membrane. The catalytic sites are hosted primarily by the beta subunits. This is ATP synthase subunit beta from Flavobacterium johnsoniae (strain ATCC 17061 / DSM 2064 / JCM 8514 / BCRC 14874 / CCUG 350202 / NBRC 14942 / NCIMB 11054 / UW101) (Cytophaga johnsonae).